Here is a 316-residue protein sequence, read N- to C-terminus: Thymidylate synthase (316 aa).

Residues R23 and 178–179 (RR) contribute to the dUMP site. C198 acts as the Nucleophile in catalysis. DUMP-binding positions include 218 to 221 (RSAD), N229, and 259 to 261 (HLY). D221 contributes to the (6R)-5,10-methylene-5,6,7,8-tetrahydrofolate binding site. A315 provides a ligand contact to (6R)-5,10-methylene-5,6,7,8-tetrahydrofolate.

Belongs to the thymidylate synthase family. Bacterial-type ThyA subfamily. In terms of assembly, homodimer.

It localises to the cytoplasm. It catalyses the reaction dUMP + (6R)-5,10-methylene-5,6,7,8-tetrahydrofolate = 7,8-dihydrofolate + dTMP. It functions in the pathway pyrimidine metabolism; dTTP biosynthesis. Catalyzes the reductive methylation of 2'-deoxyuridine-5'-monophosphate (dUMP) to 2'-deoxythymidine-5'-monophosphate (dTMP) while utilizing 5,10-methylenetetrahydrofolate (mTHF) as the methyl donor and reductant in the reaction, yielding dihydrofolate (DHF) as a by-product. This enzymatic reaction provides an intracellular de novo source of dTMP, an essential precursor for DNA biosynthesis. The polypeptide is Thymidylate synthase (Lacticaseibacillus paracasei (strain ATCC 334 / BCRC 17002 / CCUG 31169 / CIP 107868 / KCTC 3260 / NRRL B-441) (Lactobacillus paracasei)).